We begin with the raw amino-acid sequence, 193 residues long: Ribonuclease HII (193 aa).

The 179-residue stretch at 15–193 (CIVAGIDEAG…PYHRRSFRCC (179 aa)) folds into the RNase H type-2 domain. A divalent metal cation contacts are provided by Asp21, Glu22, and Asp112.

Belongs to the RNase HII family. Requires Mn(2+) as cofactor. Mg(2+) serves as cofactor.

Its subcellular location is the cytoplasm. It carries out the reaction Endonucleolytic cleavage to 5'-phosphomonoester.. Endonuclease that specifically degrades the RNA of RNA-DNA hybrids. The protein is Ribonuclease HII of Rickettsia rickettsii (strain Iowa).